The chain runs to 242 residues: Adenosylcobinamide-GDP ribazoletransferase (242 aa).

A run of 5 helical transmembrane segments spans residues 31–51, 52–72, 109–129, 134–154, and 188–208; these read LLFYPVVGVLFGVLLWALSTA, LMGAPLLLHAALLLTAWVLLS, IAVVTLGLVLLLKFTALVALI, GAALILAPLIGRASMLALFLT, and ILIGGFSGGVAVLLAAICFIG.

Belongs to the CobS family. Mg(2+) is required as a cofactor.

Its subcellular location is the cell inner membrane. It catalyses the reaction alpha-ribazole + adenosylcob(III)inamide-GDP = adenosylcob(III)alamin + GMP + H(+). The catalysed reaction is alpha-ribazole 5'-phosphate + adenosylcob(III)inamide-GDP = adenosylcob(III)alamin 5'-phosphate + GMP + H(+). The protein operates within cofactor biosynthesis; adenosylcobalamin biosynthesis; adenosylcobalamin from cob(II)yrinate a,c-diamide: step 7/7. In terms of biological role, joins adenosylcobinamide-GDP and alpha-ribazole to generate adenosylcobalamin (Ado-cobalamin). Also synthesizes adenosylcobalamin 5'-phosphate from adenosylcobinamide-GDP and alpha-ribazole 5'-phosphate. This is Adenosylcobinamide-GDP ribazoletransferase from Pseudomonas fluorescens (strain SBW25).